The following is a 227-amino-acid chain: Nodulation protein W (227 aa).

A Response regulatory domain is found at 21-135 (IVFVVEDDIS…ELLDAVVAAT (115 aa)). Position 70 is a 4-aspartylphosphate (D70). Positions 151 to 216 (LKSLFETLSP…DLIRMSETLG (66 aa)) constitute an HTH luxR-type domain. The segment at residues 175–194 (NKQVAAELGLAEITVKIYRG) is a DNA-binding region (H-T-H motif).

Post-translationally, phosphorylated by NodV.

The protein localises to the cytoplasm. In terms of biological role, member of the two-component regulatory system NodV/NodW probably involved in the regulation of the transcription of genes involved in the nodulation process. The chain is Nodulation protein W (nodW) from Bradyrhizobium diazoefficiens (strain JCM 10833 / BCRC 13528 / IAM 13628 / NBRC 14792 / USDA 110).